A 93-amino-acid polypeptide reads, in one-letter code: Large ribosomal subunit protein uL23cz/uL23cy (93 aa).

The protein belongs to the universal ribosomal protein uL23 family. Part of the 50S ribosomal subunit.

It localises to the plastid. The protein resides in the chloroplast. Its function is as follows. Binds to 23S rRNA. The protein is Large ribosomal subunit protein uL23cz/uL23cy (rpl23-A) of Platanus occidentalis (Sycamore).